We begin with the raw amino-acid sequence, 384 residues long: 1-deoxy-D-xylulose 5-phosphate reductoisomerase (384 aa).

NADPH-binding residues include Thr-10, Gly-11, Ser-12, Ile-13, Arg-37, Asn-38, and Asn-124. Residue Lys-125 coordinates 1-deoxy-D-xylulose 5-phosphate. Glu-126 serves as a coordination point for NADPH. Asp-150 contributes to the Mn(2+) binding site. 1-deoxy-D-xylulose 5-phosphate-binding residues include Ser-151, Glu-152, Ser-176, and His-199. Residue Glu-152 coordinates Mn(2+). Position 205 (Gly-205) interacts with NADPH. 1-deoxy-D-xylulose 5-phosphate is bound by residues Ser-212, Asn-217, Lys-218, and Glu-221. Mn(2+) is bound at residue Glu-221.

Belongs to the DXR family. Mg(2+) is required as a cofactor. Mn(2+) serves as cofactor.

It catalyses the reaction 2-C-methyl-D-erythritol 4-phosphate + NADP(+) = 1-deoxy-D-xylulose 5-phosphate + NADPH + H(+). The protein operates within isoprenoid biosynthesis; isopentenyl diphosphate biosynthesis via DXP pathway; isopentenyl diphosphate from 1-deoxy-D-xylulose 5-phosphate: step 1/6. Functionally, catalyzes the NADPH-dependent rearrangement and reduction of 1-deoxy-D-xylulose-5-phosphate (DXP) to 2-C-methyl-D-erythritol 4-phosphate (MEP). This chain is 1-deoxy-D-xylulose 5-phosphate reductoisomerase, found in Clostridium perfringens (strain 13 / Type A).